A 411-amino-acid chain; its full sequence is Dihydrofolate synthase/folylpolyglutamate synthase (411 aa).

53–56 (GKGT) serves as a coordination point for ATP. Serine 77 is a binding site for Mg(2+). 7,8-dihydropteroate-binding positions include 116–119 (TYFE) and 147–149 (LDA). Mg(2+) is bound at residue histidine 167. 2 residues coordinate ATP: arginine 283 and aspartate 296.

This sequence belongs to the folylpolyglutamate synthase family. As to quaternary structure, monomer. Mg(2+) serves as cofactor.

The catalysed reaction is 7,8-dihydropteroate + L-glutamate + ATP = 7,8-dihydrofolate + ADP + phosphate + H(+). The enzyme catalyses (6S)-5,6,7,8-tetrahydrofolyl-(gamma-L-Glu)(n) + L-glutamate + ATP = (6S)-5,6,7,8-tetrahydrofolyl-(gamma-L-Glu)(n+1) + ADP + phosphate + H(+). It carries out the reaction 10-formyltetrahydrofolyl-(gamma-L-Glu)(n) + L-glutamate + ATP = 10-formyltetrahydrofolyl-(gamma-L-Glu)(n+1) + ADP + phosphate + H(+). It catalyses the reaction (6R)-5,10-methylenetetrahydrofolyl-(gamma-L-Glu)(n) + L-glutamate + ATP = (6R)-5,10-methylenetetrahydrofolyl-(gamma-L-Glu)(n+1) + ADP + phosphate + H(+). It functions in the pathway cofactor biosynthesis; tetrahydrofolate biosynthesis; 7,8-dihydrofolate from 2-amino-4-hydroxy-6-hydroxymethyl-7,8-dihydropteridine diphosphate and 4-aminobenzoate: step 2/2. Its pathway is cofactor biosynthesis; tetrahydrofolylpolyglutamate biosynthesis. Functionally, functions in two distinct reactions of the de novo folate biosynthetic pathway. Catalyzes the addition of a glutamate residue to dihydropteroate (7,8-dihydropteroate or H2Pte) to form dihydrofolate (7,8-dihydrofolate monoglutamate or H2Pte-Glu). Also catalyzes successive additions of L-glutamate to tetrahydrofolate or 10-formyltetrahydrofolate or 5,10-methylenetetrahydrofolate, leading to folylpolyglutamate derivatives. The protein is Dihydrofolate synthase/folylpolyglutamate synthase (folC) of Buchnera aphidicola subsp. Acyrthosiphon pisum (strain APS) (Acyrthosiphon pisum symbiotic bacterium).